Reading from the N-terminus, the 185-residue chain is Ribosome-recycling factor (185 aa).

It belongs to the RRF family.

The protein localises to the cytoplasm. Functionally, responsible for the release of ribosomes from messenger RNA at the termination of protein biosynthesis. May increase the efficiency of translation by recycling ribosomes from one round of translation to another. This Halorhodospira halophila (strain DSM 244 / SL1) (Ectothiorhodospira halophila (strain DSM 244 / SL1)) protein is Ribosome-recycling factor.